Reading from the N-terminus, the 155-residue chain is Deoxyuridine 5'-triphosphate nucleotidohydrolase (155 aa).

Residues 74–76, asparagine 87, and 91–93 each bind substrate; these read RSG and LID.

It belongs to the dUTPase family. The cofactor is Mg(2+).

The enzyme catalyses dUTP + H2O = dUMP + diphosphate + H(+). Its pathway is pyrimidine metabolism; dUMP biosynthesis; dUMP from dCTP (dUTP route): step 2/2. Functionally, this enzyme is involved in nucleotide metabolism: it produces dUMP, the immediate precursor of thymidine nucleotides and it decreases the intracellular concentration of dUTP so that uracil cannot be incorporated into DNA. The protein is Deoxyuridine 5'-triphosphate nucleotidohydrolase of Xanthomonas oryzae pv. oryzae (strain PXO99A).